The following is a 335-amino-acid chain: Phosphate acyltransferase (335 aa).

Belongs to the PlsX family. In terms of assembly, homodimer. Probably interacts with PlsY.

The protein resides in the cytoplasm. It carries out the reaction a fatty acyl-[ACP] + phosphate = an acyl phosphate + holo-[ACP]. The protein operates within lipid metabolism; phospholipid metabolism. Catalyzes the reversible formation of acyl-phosphate (acyl-PO(4)) from acyl-[acyl-carrier-protein] (acyl-ACP). This enzyme utilizes acyl-ACP as fatty acyl donor, but not acyl-CoA. This chain is Phosphate acyltransferase, found in Streptococcus pyogenes serotype M6 (strain ATCC BAA-946 / MGAS10394).